Consider the following 568-residue polypeptide: Urease subunit alpha (568 aa).

The 436-residue stretch at 133-568 (GGVDTHIHFI…LPLAQKYFLF (436 aa)) folds into the Urease domain. Residues H138, H140, and K221 each coordinate Ni(2+). K221 carries the N6-carboxylysine modification. H223 is a binding site for substrate. Ni(2+) is bound by residues H250 and H276. Residue H324 is the Proton donor of the active site. D364 contacts Ni(2+).

The protein belongs to the metallo-dependent hydrolases superfamily. Urease alpha subunit family. In terms of assembly, heterohexamer of 3 UreC (alpha) and 3 UreAB (gamma/beta) subunits. The cofactor is Ni cation. Carboxylation allows a single lysine to coordinate two nickel ions.

Its subcellular location is the cytoplasm. It catalyses the reaction urea + 2 H2O + H(+) = hydrogencarbonate + 2 NH4(+). Its pathway is nitrogen metabolism; urea degradation; CO(2) and NH(3) from urea (urease route): step 1/1. The sequence is that of Urease subunit alpha from Deinococcus radiodurans (strain ATCC 13939 / DSM 20539 / JCM 16871 / CCUG 27074 / LMG 4051 / NBRC 15346 / NCIMB 9279 / VKM B-1422 / R1).